The following is a 117-amino-acid chain: Large ribosomal subunit protein bL20 (117 aa).

Belongs to the bacterial ribosomal protein bL20 family.

Functionally, binds directly to 23S ribosomal RNA and is necessary for the in vitro assembly process of the 50S ribosomal subunit. It is not involved in the protein synthesizing functions of that subunit. This Rickettsia africae (strain ESF-5) protein is Large ribosomal subunit protein bL20.